Here is a 441-residue protein sequence, read N- to C-terminus: pH-response regulator protein palC (441 aa).

The region spanning 3-352 (ISYTGQLPTT…GAAYAAILQL (350 aa)) is the BRO1 domain. Disordered stretches follow at residues 278–304 (RKDD…TSSG) and 414–441 (KWTP…GSYY).

It belongs to the palC family.

In terms of biological role, required for the proteolytic cleavage of the transcription factor RIM101 in response to alkaline ambient pH. This is pH-response regulator protein palC from Yarrowia lipolytica (strain CLIB 122 / E 150) (Yeast).